A 1254-amino-acid chain; its full sequence is Zinc finger protein BRUTUS-like At1g18910 (1254 aa).

The interval 1–30 is disordered; that stretch reads MGVGDPLPLPPEKNRREVNKPPDIASTSSS. A helical membrane pass occupies residues 454 to 474; it reads IHFLPLGLLKCVIMWFSAQLP. The CHY-type zinc finger occupies 1013 to 1082; that stretch reads PHKLIFGCKH…ASCSNISCSS (70 aa). Zn(2+)-binding residues include cysteine 1020, histidine 1022, cysteine 1033, cysteine 1034, cysteine 1040, cysteine 1043, histidine 1044, histidine 1050, cysteine 1062, cysteine 1065, cysteine 1075, cysteine 1080, cysteine 1089, cysteine 1092, histidine 1103, cysteine 1104, cysteine 1107, cysteine 1110, histidine 1122, cysteine 1123, cysteine 1126, cysteine 1129, histidine 1137, and cysteine 1139. Residues 1084 to 1147 form a CTCHY-type zinc finger; sequence MGKYYCKICK…VCREKCLEDN (64 aa). The segment at 1148 to 1190 adopts an RING-type; atypical zinc-finger fold; it reads CPICHEYIFTSNSPVKALPCGHVMHSTCFQEYTCSHYTCPICS.

Binds zinc and iron ions.

It localises to the membrane. Its subcellular location is the nucleus. It participates in protein modification; protein ubiquitination. Probable E3 ubiquitin-protein ligase that may regulate the response to iron deficiency and thus contributes to iron homeostasis. This is Zinc finger protein BRUTUS-like At1g18910 from Arabidopsis thaliana (Mouse-ear cress).